The chain runs to 612 residues: U-box domain-containing protein 11 (612 aa).

Positions 127-196 (DEVGEQVELA…LHFGEEEEKQ (70 aa)) form a coiled coil. The region spanning 240–314 (TIPVDFLCPV…SRWCAEHNIE (75 aa)) is the U-box domain. ARM repeat units lie at residues 363-402 (TDNR…NLSI), 404-443 (ENNK…SLSL), 445-484 (DENK…NLCI), 486-526 (HGNK…VLAN), and 528-567 (QDAK…SLCK).

It catalyses the reaction S-ubiquitinyl-[E2 ubiquitin-conjugating enzyme]-L-cysteine + [acceptor protein]-L-lysine = [E2 ubiquitin-conjugating enzyme]-L-cysteine + N(6)-ubiquitinyl-[acceptor protein]-L-lysine.. It functions in the pathway protein modification; protein ubiquitination. In terms of biological role, functions as an E3 ubiquitin ligase. The sequence is that of U-box domain-containing protein 11 (PUB11) from Arabidopsis thaliana (Mouse-ear cress).